The following is a 227-amino-acid chain: Translation initiation factor 6 (227 aa).

It belongs to the eIF-6 family.

Binds to the 50S ribosomal subunit and prevents its association with the 30S ribosomal subunit to form the 70S initiation complex. This is Translation initiation factor 6 from Methanococcus maripaludis (strain DSM 14266 / JCM 13030 / NBRC 101832 / S2 / LL).